A 302-amino-acid chain; its full sequence is 4-hydroxy-tetrahydrodipicolinate synthase (302 aa).

Pyruvate is bound at residue Thr55. Tyr144 acts as the Proton donor/acceptor in catalysis. Lys172 serves as the catalytic Schiff-base intermediate with substrate. Val214 is a binding site for pyruvate.

Belongs to the DapA family. Homotetramer; dimer of dimers.

The protein resides in the cytoplasm. It carries out the reaction L-aspartate 4-semialdehyde + pyruvate = (2S,4S)-4-hydroxy-2,3,4,5-tetrahydrodipicolinate + H2O + H(+). It participates in amino-acid biosynthesis; L-lysine biosynthesis via DAP pathway; (S)-tetrahydrodipicolinate from L-aspartate: step 3/4. In terms of biological role, catalyzes the condensation of (S)-aspartate-beta-semialdehyde [(S)-ASA] and pyruvate to 4-hydroxy-tetrahydrodipicolinate (HTPA). This chain is 4-hydroxy-tetrahydrodipicolinate synthase, found in Synechococcus sp. (strain CC9605).